The sequence spans 728 residues: 1,4-alpha-glucan branching enzyme GlgB (728 aa).

Asp405 (nucleophile) is an active-site residue. Catalysis depends on Glu458, which acts as the Proton donor.

The protein belongs to the glycosyl hydrolase 13 family. GlgB subfamily. In terms of assembly, monomer.

The catalysed reaction is Transfers a segment of a (1-&gt;4)-alpha-D-glucan chain to a primary hydroxy group in a similar glucan chain.. Its pathway is glycan biosynthesis; glycogen biosynthesis. Functionally, catalyzes the formation of the alpha-1,6-glucosidic linkages in glycogen by scission of a 1,4-alpha-linked oligosaccharide from growing alpha-1,4-glucan chains and the subsequent attachment of the oligosaccharide to the alpha-1,6 position. The chain is 1,4-alpha-glucan branching enzyme GlgB from Escherichia coli O139:H28 (strain E24377A / ETEC).